Here is a 90-residue protein sequence, read N- to C-terminus: YcgL domain-containing protein YpsIP31758_2009 (90 aa).

One can recognise a YcgL domain in the interval 1 to 85 (MLCAIYRSPK…PPESLLKMHL (85 aa)).

The chain is YcgL domain-containing protein YpsIP31758_2009 from Yersinia pseudotuberculosis serotype O:1b (strain IP 31758).